The following is a 202-amino-acid chain: uncharacterized protein (202 aa).

A helical transmembrane segment spans residues 175–195 (INTGIALFIILTSLLVYFIQF).

It is found in the membrane. This is an uncharacterized protein from Dictyostelium discoideum (Social amoeba).